Consider the following 166-residue polypeptide: Mitochondrial fission process protein 1 (166 aa).

3 helical membrane passes run serine 33–alanine 53, alanine 78–phenylalanine 98, and threonine 125–valine 145.

It belongs to the MTFP1 family.

Its subcellular location is the mitochondrion inner membrane. Its function is as follows. Involved in the mitochondrial division probably by regulating membrane fission. Loss-of-function leads to apoptosis. The chain is Mitochondrial fission process protein 1 (mtp-18) from Caenorhabditis elegans.